The primary structure comprises 363 residues: Autophagy-related protein 3 (363 aa).

Composition is skewed to basic and acidic residues over residues 84–106 (DFAGDAGHDETVVRDGEDFRGDG) and 129–138 (ARVRDVRTVD). A flexible region region spans residues 84–171 (DFAGDAGHDE…DDEAIIRDPK (88 aa)). Residues 84 to 174 (DFAGDAGHDE…AIIRDPKADN (91 aa)) form a disordered region. Residues 139-164 (ESGEMGEREDDEDDIPDMEDDDDDDE) show a composition bias toward acidic residues. The active-site Glycyl thioester intermediate is the C247. Positions 251 to 339 (SVMKTLLDRA…EEEVAIRVDQ (89 aa)) are handle region.

Belongs to the ATG3 family. In terms of assembly, monomer. Interacts with atg8 through an intermediate thioester bond through the C-terminal Gly of atg8. Interacts with the C-terminal region of the E1-like atg7 enzyme. Also interacts with the atg12-atg5 conjugate.

The protein localises to the cytoplasm. In terms of biological role, E2 conjugating enzyme required for the cytoplasm to vacuole transport (Cvt) and autophagy. Required for selective autophagic degradation of the nucleus (nucleophagy) as well as for mitophagy which contributes to regulate mitochondrial quantity and quality by eliminating the mitochondria to a basal level to fulfill cellular energy requirements and preventing excess ROS production. Responsible for the E2-like covalent binding of phosphatidylethanolamine to the C-terminal Gly of atg8. The atg12-atg5 conjugate plays a role of an E3 and promotes the transfer of atg8 from atg3 to phosphatidylethanolamine (PE). This step is required for the membrane association of atg8. The formation of the atg8-phosphatidylethanolamine conjugate is essential for autophagy and for the cytoplasm to vacuole transport (Cvt). The atg8-PE conjugate mediates tethering between adjacent membranes and stimulates membrane hemifusion, leading to expansion of the autophagosomal membrane during autophagy. Required for normal mycelial growth and conidiogenesis, and regulates sclerotial formation. Plays an essential role in pathogenesis. The chain is Autophagy-related protein 3 from Botryotinia fuckeliana (strain BcDW1) (Noble rot fungus).